Consider the following 95-residue polypeptide: Glutamyl-tRNA(Gln) amidotransferase subunit C (95 aa).

It belongs to the GatC family. As to quaternary structure, heterotrimer of A, B and C subunits.

It catalyses the reaction L-glutamyl-tRNA(Gln) + L-glutamine + ATP + H2O = L-glutaminyl-tRNA(Gln) + L-glutamate + ADP + phosphate + H(+). The catalysed reaction is L-aspartyl-tRNA(Asn) + L-glutamine + ATP + H2O = L-asparaginyl-tRNA(Asn) + L-glutamate + ADP + phosphate + 2 H(+). Its function is as follows. Allows the formation of correctly charged Asn-tRNA(Asn) or Gln-tRNA(Gln) through the transamidation of misacylated Asp-tRNA(Asn) or Glu-tRNA(Gln) in organisms which lack either or both of asparaginyl-tRNA or glutaminyl-tRNA synthetases. The reaction takes place in the presence of glutamine and ATP through an activated phospho-Asp-tRNA(Asn) or phospho-Glu-tRNA(Gln). This chain is Glutamyl-tRNA(Gln) amidotransferase subunit C, found in Moraxella catarrhalis (Branhamella catarrhalis).